Consider the following 345-residue polypeptide: Anthranilate phosphoribosyltransferase 1 (345 aa).

5-phospho-alpha-D-ribose 1-diphosphate-binding positions include Gly86, 89–90 (GD), Thr94, 96–99 (NIST), 114–122 (KHGGRGVSS), and Ser126. Gly86 is an anthranilate binding site. Ser98 provides a ligand contact to Mg(2+). Arg172 contacts anthranilate. Mg(2+) contacts are provided by Asp231 and Glu232.

This sequence belongs to the anthranilate phosphoribosyltransferase family. As to quaternary structure, homodimer. It depends on Mg(2+) as a cofactor.

The catalysed reaction is N-(5-phospho-beta-D-ribosyl)anthranilate + diphosphate = 5-phospho-alpha-D-ribose 1-diphosphate + anthranilate. Its pathway is amino-acid biosynthesis; L-tryptophan biosynthesis; L-tryptophan from chorismate: step 2/5. Catalyzes the transfer of the phosphoribosyl group of 5-phosphorylribose-1-pyrophosphate (PRPP) to anthranilate to yield N-(5'-phosphoribosyl)-anthranilate (PRA). In Ralstonia nicotianae (strain ATCC BAA-1114 / GMI1000) (Ralstonia solanacearum), this protein is Anthranilate phosphoribosyltransferase 1.